The following is a 339-amino-acid chain: MRVYYDRDADVNLIKGKKVVVVGYGSQGHAHALNLRDSGVKDVAVALRAGSATAKKAEGEGLKVMTPADAAKWGDVVMILTPDELQADLYYNDLAANMKQGASLVFAHGLNIHFKLIEARADLDVFMVAPKGPGHTVRGEYVKGGGVPCLVAVAQNASGNALEIALSYASAIGGGRSGIIETSFREECETDLFGEQVVLCGGLTKLIQYGFETLVEAGYAPEMAYFECLHEVKLIVDLIYEGGIANMRYSISNTAEYGDYVTGPRIITDETKAEMKRVLEDIQAGRFVRDWMLECKAGQPSFKATRRIQAEHGIEVVGEKLRAMMPWIAKNKLVDKAKN.

In terms of domain architecture, KARI N-terminal Rossmann spans 1 to 182; that stretch reads MRVYYDRDAD…GGGRSGIIET (182 aa). Residues 24–27, arginine 48, serine 51, threonine 53, and 83–86 contribute to the NADP(+) site; these read YGSQ and DELQ. The active site involves histidine 108. Residue glycine 134 participates in NADP(+) binding. The KARI C-terminal knotted domain maps to 183-328; sequence SFREECETDL…EKLRAMMPWI (146 aa). Residues aspartate 191, glutamate 195, glutamate 227, and glutamate 231 each coordinate Mg(2+). Position 252 (serine 252) interacts with substrate.

This sequence belongs to the ketol-acid reductoisomerase family. Mg(2+) is required as a cofactor.

The enzyme catalyses (2R)-2,3-dihydroxy-3-methylbutanoate + NADP(+) = (2S)-2-acetolactate + NADPH + H(+). The catalysed reaction is (2R,3R)-2,3-dihydroxy-3-methylpentanoate + NADP(+) = (S)-2-ethyl-2-hydroxy-3-oxobutanoate + NADPH + H(+). Its pathway is amino-acid biosynthesis; L-isoleucine biosynthesis; L-isoleucine from 2-oxobutanoate: step 2/4. The protein operates within amino-acid biosynthesis; L-valine biosynthesis; L-valine from pyruvate: step 2/4. Its function is as follows. Involved in the biosynthesis of branched-chain amino acids (BCAA). Catalyzes an alkyl-migration followed by a ketol-acid reduction of (S)-2-acetolactate (S2AL) to yield (R)-2,3-dihydroxy-isovalerate. In the isomerase reaction, S2AL is rearranged via a Mg-dependent methyl migration to produce 3-hydroxy-3-methyl-2-ketobutyrate (HMKB). In the reductase reaction, this 2-ketoacid undergoes a metal-dependent reduction by NADPH to yield (R)-2,3-dihydroxy-isovalerate. The sequence is that of Ketol-acid reductoisomerase (NADP(+)) from Paramagnetospirillum magneticum (strain ATCC 700264 / AMB-1) (Magnetospirillum magneticum).